Here is a 170-residue protein sequence, read N- to C-terminus: tRNA-specific adenosine deaminase 2 (170 aa).

The 126-residue stretch at 3-128 (EEIQNWMHKA…SVLNVAGDNI (126 aa)) folds into the CMP/dCMP-type deaminase domain. A Zn(2+)-binding site is contributed by His-54. Glu-56 functions as the Proton donor in the catalytic mechanism. Cys-90 and Cys-93 together coordinate Zn(2+).

Belongs to the cytidine and deoxycytidylate deaminase family. ADAT2 subfamily. Zn(2+) is required as a cofactor.

The enzyme catalyses adenosine(34) in tRNA + H2O + H(+) = inosine(34) in tRNA + NH4(+). Functionally, probably participates in deamination of adenosine-34 to inosine in many tRNAs. In Xenopus tropicalis (Western clawed frog), this protein is tRNA-specific adenosine deaminase 2 (adat2).